The sequence spans 1329 residues: Synergin gamma (1329 aa).

Residues 112-152 are a coiled coil; it reads MQKQFAEEQQKRFEQQQKLLEEERKRRQFEEQKQKLRLLSS. Positions 175–211 are disordered; sequence GFSRDAKMHPTPASHPKKPDCPTSSHSTKTVSPSSAF. The span at 197 to 209 shows a compositional bias: low complexity; sequence TSSHSTKTVSPSS. The region spanning 393–504 is the EH domain; it reads NESLVPDAYK…TPVSQPTAMT (112 aa). The short motif at 555 to 559 is the DFXDF motif 1 element; the sequence is DFQDF. Ser571 bears the Phosphoserine mark. Residues 578-594 show a composition bias toward polar residues; the sequence is VPASSKTSNSQHGNSAP. Residues 578 to 600 are disordered; sequence VPASSKTSNSQHGNSAPSLLIPL. Lys609 is subject to N6-acetyllysine. The interval 614–878 is interaction with AP1G1; sequence KGISAEKPSE…ADFHSSKFSS (265 aa). Disordered stretches follow at residues 661-701 and 730-753; these read GTDD…TQTQ and AFST…PASL. Ser676 carries the post-translational modification Phosphoserine. Positions 761 to 773 are interaction with AP1G1, AP1G2 and GGA1; sequence LADDFGEFNLFGE. The short motif at 785 to 789 is the DFXDF motif 2 element; it reads DFADF. A disordered region spans residues 797–835; the sequence is IPSEPKADDKYEALREEGSPGALSTSTVEGAHNPPVSSS. Residues 801-814 are compositionally biased toward basic and acidic residues; sequence PKADDKYEALREEG. Phosphoserine is present on Ser815. Lys836 carries the post-translational modification N6-acetyllysine. Residues Ser844 and Ser864 each carry the phosphoserine modification. 3 disordered regions span residues 856–922, 941–1042, and 1088–1113; these read KENT…DSED, HVMS…FGEF, and SLSL…RDRS. Residues 864-873 show a composition bias toward basic and acidic residues; the sequence is SDGDFADFHS. Positions 867-871 match the DFXDF motif 3 motif; sequence DFADF. Over residues 874 to 883 the composition is skewed to low complexity; that stretch reads SKFSSTSSDK. Ser904, Ser944, Ser947, Ser997, Ser1021, Ser1088, Ser1090, Ser1102, and Ser1113 each carry phosphoserine. Polar residues predominate over residues 944 to 955; sequence SDSSLDLPTVSG. A compositionally biased stretch (polar residues) spans 1016-1028; the sequence is ENTCPSPASSVAS. At Thr1115 the chain carries Phosphothreonine.

In terms of assembly, self-associates. Interacts with GGA1 (via GAE domain). Interacts with GGA2 and GGA3. Interacts with AP1G1 (via GAE domain), a subunit of adapter protein complex AP-1. Interacts with AP1G2 (via GAE domain) a subunit of adapter protein complex AP-1. Component of the aftiphilin/p200/gamma-synergin complex, at least composed of AFTPH/aftiphilin, HEATR5B/p200a and SYNRG/gamma-synergin, which plays a role in the AP1G1/AP-1-mediated trafficking of transferrin from early to recycling endosomes. Within the complex interacts with AFTPH/aftiphilin and HEATR5B/p200a; the interactions are direct. Interacts (via EH domain) with SCAMP1. Detected in brain and liver (at protein level). Ubiquitously expressed.

It is found in the cytoplasm. The protein resides in the golgi apparatus. It localises to the trans-Golgi network membrane. Its subcellular location is the perinuclear region. The protein localises to the cytoplasmic vesicle. It is found in the clathrin-coated vesicle. Functionally, plays a role in endocytosis and/or membrane trafficking at the trans-Golgi network (TGN). May act by linking the adapter protein complex AP-1 to other proteins. Component of clathrin-coated vesicles. Component of the aftiphilin/p200/gamma-synergin complex, which plays roles in AP1G1/AP-1-mediated protein trafficking including the trafficking of transferrin from early to recycling endosomes, and the membrane trafficking of furin and the lysosomal enzyme cathepsin D between the trans-Golgi network (TGN) and endosomes. This Rattus norvegicus (Rat) protein is Synergin gamma (Synrg).